The sequence spans 263 residues: 4-hydroxy-tetrahydrodipicolinate reductase (263 aa).

NAD(+) is bound by residues 7–12, 96–98, and 122–125; these read GFKGRM, GTT, and APNF. Residue His-152 is the Proton donor/acceptor of the active site. His-153 serves as a coordination point for (S)-2,3,4,5-tetrahydrodipicolinate. Lys-156 functions as the Proton donor in the catalytic mechanism. Position 162 to 163 (162 to 163) interacts with (S)-2,3,4,5-tetrahydrodipicolinate; it reads GT.

Belongs to the DapB family.

The protein localises to the cytoplasm. The catalysed reaction is (S)-2,3,4,5-tetrahydrodipicolinate + NAD(+) + H2O = (2S,4S)-4-hydroxy-2,3,4,5-tetrahydrodipicolinate + NADH + H(+). The enzyme catalyses (S)-2,3,4,5-tetrahydrodipicolinate + NADP(+) + H2O = (2S,4S)-4-hydroxy-2,3,4,5-tetrahydrodipicolinate + NADPH + H(+). The protein operates within amino-acid biosynthesis; L-lysine biosynthesis via DAP pathway; (S)-tetrahydrodipicolinate from L-aspartate: step 4/4. Functionally, catalyzes the conversion of 4-hydroxy-tetrahydrodipicolinate (HTPA) to tetrahydrodipicolinate. The sequence is that of 4-hydroxy-tetrahydrodipicolinate reductase from Listeria welshimeri serovar 6b (strain ATCC 35897 / DSM 20650 / CCUG 15529 / CIP 8149 / NCTC 11857 / SLCC 5334 / V8).